The following is a 248-amino-acid chain: Probable proteasome subunit alpha type-3 (248 aa).

The protein belongs to the peptidase T1A family. As to quaternary structure, the 26S proteasome consists of a 20S proteasome core and two 19S regulatory subunits. The 20S proteasome core is composed of 28 subunits that are arranged in four stacked rings, resulting in a barrel-shaped structure. The two end rings are each formed by seven alpha subunits, and the two central rings are each formed by seven beta subunits. The catalytic chamber with the active sites is on the inside of the barrel.

It is found in the cytoplasm. The protein resides in the nucleus. Its function is as follows. The proteasome is a multicatalytic proteinase complex which is characterized by its ability to cleave peptides with Arg, Phe, Tyr, Leu, and Glu adjacent to the leaving group at neutral or slightly basic pH. The proteasome has an ATP-dependent proteolytic activity. This is Probable proteasome subunit alpha type-3 from Schizosaccharomyces pombe (strain 972 / ATCC 24843) (Fission yeast).